The primary structure comprises 554 residues: 3-(3-hydroxy-phenyl)propionate/3-hydroxycinnamic acid hydroxylase (554 aa).

FAD contacts are provided by residues 17–46 (QVAI…VVEK) and 285–295 (FRIDRVLLAGD).

Belongs to the PheA/TfdB FAD monooxygenase family. Requires FAD as cofactor.

It catalyses the reaction 3-(3-hydroxyphenyl)propanoate + NADH + O2 + H(+) = 3-(2,3-dihydroxyphenyl)propanoate + NAD(+) + H2O. The enzyme catalyses (2E)-3-(3-hydroxyphenyl)prop-2-enoate + NADH + O2 + H(+) = (2E)-3-(2,3-dihydroxyphenyl)prop-2-enoate + NAD(+) + H2O. It participates in aromatic compound metabolism; 3-phenylpropanoate degradation. In terms of biological role, catalyzes the insertion of one atom of molecular oxygen into position 2 of the phenyl ring of 3-(3-hydroxyphenyl)propionate (3-HPP) and hydroxycinnamic acid (3HCI). The sequence is that of 3-(3-hydroxy-phenyl)propionate/3-hydroxycinnamic acid hydroxylase from Escherichia coli O81 (strain ED1a).